The following is an 800-amino-acid chain: DNA mismatch repair protein MutS (800 aa).

616–623 serves as a coordination point for ATP; it reads GPNMGGKS.

It belongs to the DNA mismatch repair MutS family.

In terms of biological role, this protein is involved in the repair of mismatches in DNA. It is possible that it carries out the mismatch recognition step. This protein has a weak ATPase activity. The sequence is that of DNA mismatch repair protein MutS from Buchnera aphidicola subsp. Baizongia pistaciae (strain Bp).